The sequence spans 627 residues: Xaa-Pro aminopeptidase 1 (627 aa).

A peptide-binding residues include arginine 88 and histidine 405. Positions 424, 435, and 498 each coordinate Mn(2+). The a peptide site is built by histidine 498, histidine 507, and glutamate 533. The Mn(2+) site is built by glutamate 533 and glutamate 547.

Belongs to the peptidase M24B family. In terms of assembly, homodimer. Requires Mn(2+) as cofactor.

It localises to the cytoplasm. It is found in the cytosol. It carries out the reaction Release of any N-terminal amino acid, including proline, that is linked to proline, even from a dipeptide or tripeptide.. Its function is as follows. Metalloaminopeptidase that catalyzes the removal of a penultimate prolyl residue from the N-termini of peptides, such as Arg-Pro-Pro. The sequence is that of Xaa-Pro aminopeptidase 1 (xpnpep1) from Dictyostelium discoideum (Social amoeba).